Reading from the N-terminus, the 863-residue chain is Oleate activated transcription factor 3 (863 aa).

Positions 19 to 47 (CTNCKKRKSKCDRTKPCGTCVRLGDVDSC) form a DNA-binding region, zn(2)-C6 fungal-type. The span at 52 to 63 (DSSGQPESSPSL) shows a compositional bias: polar residues. The tract at residues 52–81 (DSSGQPESSPSLNDADPLRKQSTPAERISP) is disordered.

The protein belongs to the OAF3 family.

It localises to the cytoplasm. The protein resides in the nucleus. The protein localises to the mitochondrion. Its function is as follows. Transcriptional inhibitor with a significantly increased number of target genes in response to oleate. This Saccharomyces cerevisiae (strain RM11-1a) (Baker's yeast) protein is Oleate activated transcription factor 3 (OAF3).